Here is a 106-residue protein sequence, read N- to C-terminus: Oncosphere antigen B (106 aa).

The Fibronectin type-III domain maps to 11 to 106 (LPQHFRWSQV…QSELRSMCIK (96 aa)).

The chain is Oncosphere antigen B (ONCB) from Hydatigena taeniaeformis (Feline tapeworm).